The following is a 567-amino-acid chain: Potassium-transporting ATPase potassium-binding subunit (567 aa).

The next 11 membrane-spanning stretches (helical) occupy residues 5-25 (GWIQ…PLGF), 64-84 (TAYA…LYAL), 136-156 (GLTV…IALI), 179-199 (LYVL…LGIP), 254-274 (ISNL…TNVF), 285-305 (WAIL…CYWA), 330-350 (FGIA…CGAV), 357-376 (FTAL…EVIV), 421-441 (MLAI…AVVL), 486-506 (ITIG…ALAI), and 529-549 (LFVG…FFPA).

This sequence belongs to the KdpA family. In terms of assembly, the system is composed of three essential subunits: KdpA, KdpB and KdpC.

It localises to the cell inner membrane. Its function is as follows. Part of the high-affinity ATP-driven potassium transport (or Kdp) system, which catalyzes the hydrolysis of ATP coupled with the electrogenic transport of potassium into the cytoplasm. This subunit binds the periplasmic potassium ions and delivers the ions to the membrane domain of KdpB through an intramembrane tunnel. The chain is Potassium-transporting ATPase potassium-binding subunit from Mesorhizobium japonicum (strain LMG 29417 / CECT 9101 / MAFF 303099) (Mesorhizobium loti (strain MAFF 303099)).